A 223-amino-acid chain; its full sequence is PRA1 family protein B5 (223 aa).

The next 5 membrane-spanning stretches (helical) occupy residues 83-103 (SSYF…FSLL), 105-125 (HPFS…LYLF), 146-166 (GGLI…SVLI), 170-190 (MIGI…DLFL), and 196-216 (AASG…APSA).

The protein belongs to the PRA1 family. Interacts with PRA1B1, PRA1B2, PRA1B3, PRA1B4, PRA1B6 and PRA1E. In terms of tissue distribution, expressed in roots, lateral roots, lateral root caps, columella cells, leaves, and shoot apex.

The protein localises to the endosome membrane. In terms of biological role, may be involved in both secretory and endocytic intracellular trafficking in the endosomal/prevacuolar compartments. This Arabidopsis thaliana (Mouse-ear cress) protein is PRA1 family protein B5 (PRA1B5).